The primary structure comprises 687 residues: Glycine--tRNA ligase beta subunit (687 aa).

It belongs to the class-II aminoacyl-tRNA synthetase family. As to quaternary structure, tetramer of two alpha and two beta subunits.

The protein resides in the cytoplasm. The enzyme catalyses tRNA(Gly) + glycine + ATP = glycyl-tRNA(Gly) + AMP + diphosphate. The protein is Glycine--tRNA ligase beta subunit of Trichlorobacter lovleyi (strain ATCC BAA-1151 / DSM 17278 / SZ) (Geobacter lovleyi).